The following is a 735-amino-acid chain: Ion-translocating oxidoreductase complex subunit C (735 aa).

4Fe-4S ferredoxin-type domains follow at residues 368 to 397 and 407 to 436; these read MGAPQEEKSCIRCSACADACPADLLPQQLY and KATAHHIADCIECGACAWVCPSNIPLVQYF. [4Fe-4S] cluster contacts are provided by C377, C380, C383, C387, C416, C419, C422, and C426. Residues 534-715 are disordered; the sequence is QARAKQAAHP…AVDPRKAAVA (182 aa). A compositionally biased stretch (low complexity) spans 666–689; sequence QQAGSEPAEPAAPRKAAVEAAIAR.

This sequence belongs to the 4Fe4S bacterial-type ferredoxin family. RnfC subfamily. In terms of assembly, the complex is composed of six subunits: RsxA, RsxB, RsxC, RsxD, RsxE and RsxG. Requires [4Fe-4S] cluster as cofactor.

The protein localises to the cell inner membrane. Part of a membrane-bound complex that couples electron transfer with translocation of ions across the membrane. Required to maintain the reduced state of SoxR. The protein is Ion-translocating oxidoreductase complex subunit C of Salmonella paratyphi B (strain ATCC BAA-1250 / SPB7).